The primary structure comprises 298 residues: Lipoyl synthase 1 (298 aa).

7 residues coordinate [4Fe-4S] cluster: Cys34, Cys39, Cys45, Cys60, Cys64, Cys67, and Ser274. In terms of domain architecture, Radical SAM core spans 46–263; sequence FKAGTATFLI…RRAGEGMGFL (218 aa). The segment at 277–298 is disordered; it reads AEQVQRLMRSHPRTPKNQHSPE.

Belongs to the radical SAM superfamily. Lipoyl synthase family. [4Fe-4S] cluster is required as a cofactor.

The protein localises to the cytoplasm. It catalyses the reaction [[Fe-S] cluster scaffold protein carrying a second [4Fe-4S](2+) cluster] + N(6)-octanoyl-L-lysyl-[protein] + 2 oxidized [2Fe-2S]-[ferredoxin] + 2 S-adenosyl-L-methionine + 4 H(+) = [[Fe-S] cluster scaffold protein] + N(6)-[(R)-dihydrolipoyl]-L-lysyl-[protein] + 4 Fe(3+) + 2 hydrogen sulfide + 2 5'-deoxyadenosine + 2 L-methionine + 2 reduced [2Fe-2S]-[ferredoxin]. Its pathway is protein modification; protein lipoylation via endogenous pathway; protein N(6)-(lipoyl)lysine from octanoyl-[acyl-carrier-protein]: step 2/2. Functionally, catalyzes the radical-mediated insertion of two sulfur atoms into the C-6 and C-8 positions of the octanoyl moiety bound to the lipoyl domains of lipoate-dependent enzymes, thereby converting the octanoylated domains into lipoylated derivatives. This chain is Lipoyl synthase 1, found in Gloeobacter violaceus (strain ATCC 29082 / PCC 7421).